The chain runs to 426 residues: MIDVKDLSENPDKFRASQRARGADESVVDAIISADSDRRAALIRHETLRAEQNAFGKKVAQAKGEEKQALLAEVKELANSVKAASAEAAAAQAKQEELLRVIPNLVVDGVPEGGEDDYVVLKTVGTPREFTDFEPKDHLEIGELIGAIDMERGAKVSGSRFYFLRGVGARLEMALLQMAMEQAIDAGFVPMITPTLVRPETMQGTGFDVKHDAEIYRLAEDDLYLVGTSEVALAGYHADEILDLSAGPIRYAGQSSCYRREAGSHGKDTRGIIRVHQFNKVEMFIYTTVEEAAAEHERLLAWEEEMLAKCELPYRVIDTAAGDLGMSAARKFDCEAWVPTQNAYRELTSTSNCTTFQARRLNIRERVINDEGVAKGTRAVATLNGTLATTRWIVAILEHHQNPDGSVNVPKALQKYLGGLEVLPVL.

Basic and acidic residues predominate over residues 1–15 (MIDVKDLSENPDKFR). Residues 1–20 (MIDVKDLSENPDKFRASQRA) are disordered. 228–230 (TSE) contributes to the L-serine binding site. ATP is bound by residues 259–261 (RRE) and V275. L-serine is bound at residue E282. 346 to 349 (ELTS) is an ATP binding site. Residue T386 coordinates L-serine.

It belongs to the class-II aminoacyl-tRNA synthetase family. Type-1 seryl-tRNA synthetase subfamily. In terms of assembly, homodimer. The tRNA molecule binds across the dimer.

It localises to the cytoplasm. The catalysed reaction is tRNA(Ser) + L-serine + ATP = L-seryl-tRNA(Ser) + AMP + diphosphate + H(+). It catalyses the reaction tRNA(Sec) + L-serine + ATP = L-seryl-tRNA(Sec) + AMP + diphosphate + H(+). The protein operates within aminoacyl-tRNA biosynthesis; selenocysteinyl-tRNA(Sec) biosynthesis; L-seryl-tRNA(Sec) from L-serine and tRNA(Sec): step 1/1. In terms of biological role, catalyzes the attachment of serine to tRNA(Ser). Is also able to aminoacylate tRNA(Sec) with serine, to form the misacylated tRNA L-seryl-tRNA(Sec), which will be further converted into selenocysteinyl-tRNA(Sec). This is Serine--tRNA ligase from Paenarthrobacter aurescens (strain TC1).